Here is a 137-residue protein sequence, read N- to C-terminus: MNAEAKPGDWLGKVRWDANGLVPVIAQDAATNDVLMFAWMNRDALAKTIELKRAVYYSRSRQRLWFKGEESGHVQHVHEVRLDCDEDVVLLKVEQVEGIACHTGRRSCFFQKFEGTVDDGEWVAVDPVLKDPEHIYK.

D83 is a binding site for Mg(2+). C84 contacts Zn(2+). D85 and D87 together coordinate Mg(2+). Positions 101 and 108 each coordinate Zn(2+).

The protein belongs to the PRA-CH family. In terms of assembly, homodimer. Requires Mg(2+) as cofactor. Zn(2+) is required as a cofactor.

The protein localises to the cytoplasm. The enzyme catalyses 1-(5-phospho-beta-D-ribosyl)-5'-AMP + H2O = 1-(5-phospho-beta-D-ribosyl)-5-[(5-phospho-beta-D-ribosylamino)methylideneamino]imidazole-4-carboxamide. It participates in amino-acid biosynthesis; L-histidine biosynthesis; L-histidine from 5-phospho-alpha-D-ribose 1-diphosphate: step 3/9. In terms of biological role, catalyzes the hydrolysis of the adenine ring of phosphoribosyl-AMP. The chain is Phosphoribosyl-AMP cyclohydrolase from Burkholderia mallei (strain ATCC 23344).